A 354-amino-acid chain; its full sequence is DNA polymerase IV (354 aa).

The UmuC domain maps to 6–187 (IIHVDCDCFY…LPVARLHGVG (182 aa)). The Mg(2+) site is built by aspartate 10 and aspartate 105. The active site involves glutamate 106.

The protein belongs to the DNA polymerase type-Y family. As to quaternary structure, monomer. Mg(2+) is required as a cofactor.

The protein localises to the cytoplasm. The catalysed reaction is DNA(n) + a 2'-deoxyribonucleoside 5'-triphosphate = DNA(n+1) + diphosphate. Its function is as follows. Poorly processive, error-prone DNA polymerase involved in untargeted mutagenesis. Copies undamaged DNA at stalled replication forks, which arise in vivo from mismatched or misaligned primer ends. These misaligned primers can be extended by PolIV. Exhibits no 3'-5' exonuclease (proofreading) activity. May be involved in translesional synthesis, in conjunction with the beta clamp from PolIII. This chain is DNA polymerase IV, found in Pseudomonas putida (strain GB-1).